A 227-amino-acid chain; its full sequence is Cytochrome c oxidase subunit 2 (227 aa).

The Mitochondrial intermembrane portion of the chain corresponds to 1 to 26 (MNTWMNFNLQNSNSPLMEQLMFFHNH). A helical transmembrane segment spans residues 27–48 (SMLIILLITILVGYIMSSLLYN). Over 49-62 (KLYNRYLLESQNVE) the chain is Mitochondrial matrix. Residues 63 to 82 (IIWTILPAFMLIFIALPSLR) traverse the membrane as a helical segment. Over 83–227 (LLYLLDDSNS…SFIKWISSNS (145 aa)) the chain is Mitochondrial intermembrane. Cu cation-binding residues include histidine 161, cysteine 196, glutamate 198, cysteine 200, histidine 204, and methionine 207. Glutamate 198 provides a ligand contact to Mg(2+).

It belongs to the cytochrome c oxidase subunit 2 family. As to quaternary structure, component of the cytochrome c oxidase (complex IV, CIV), a multisubunit enzyme composed of a catalytic core of 3 subunits and several supernumerary subunits. The complex exists as a monomer or a dimer and forms supercomplexes (SCs) in the inner mitochondrial membrane with ubiquinol-cytochrome c oxidoreductase (cytochrome b-c1 complex, complex III, CIII). Cu cation is required as a cofactor.

The protein resides in the mitochondrion inner membrane. The catalysed reaction is 4 Fe(II)-[cytochrome c] + O2 + 8 H(+)(in) = 4 Fe(III)-[cytochrome c] + 2 H2O + 4 H(+)(out). Its function is as follows. Component of the cytochrome c oxidase, the last enzyme in the mitochondrial electron transport chain which drives oxidative phosphorylation. The respiratory chain contains 3 multisubunit complexes succinate dehydrogenase (complex II, CII), ubiquinol-cytochrome c oxidoreductase (cytochrome b-c1 complex, complex III, CIII) and cytochrome c oxidase (complex IV, CIV), that cooperate to transfer electrons derived from NADH and succinate to molecular oxygen, creating an electrochemical gradient over the inner membrane that drives transmembrane transport and the ATP synthase. Cytochrome c oxidase is the component of the respiratory chain that catalyzes the reduction of oxygen to water. Electrons originating from reduced cytochrome c in the intermembrane space (IMS) are transferred via the dinuclear copper A center (CU(A)) of subunit 2 and heme A of subunit 1 to the active site in subunit 1, a binuclear center (BNC) formed by heme A3 and copper B (CU(B)). The BNC reduces molecular oxygen to 2 water molecules using 4 electrons from cytochrome c in the IMS and 4 protons from the mitochondrial matrix. This Ctenocephalides felis (Cat flea) protein is Cytochrome c oxidase subunit 2 (COII).